A 323-amino-acid chain; its full sequence is tRNA dimethylallyltransferase (323 aa).

ATP is bound at residue 21 to 28; sequence GPTACNKS. Residue 23–28 participates in substrate binding; it reads TACNKS. Interaction with substrate tRNA regions lie at residues 46–49, 171–175, and 252–257; these read DSAL, QRVLR, and RCVGYR.

This sequence belongs to the IPP transferase family. As to quaternary structure, monomer. Requires Mg(2+) as cofactor.

The catalysed reaction is adenosine(37) in tRNA + dimethylallyl diphosphate = N(6)-dimethylallyladenosine(37) in tRNA + diphosphate. In terms of biological role, catalyzes the transfer of a dimethylallyl group onto the adenine at position 37 in tRNAs that read codons beginning with uridine, leading to the formation of N6-(dimethylallyl)adenosine (i(6)A). This chain is tRNA dimethylallyltransferase, found in Buchnera aphidicola subsp. Baizongia pistaciae (strain Bp).